A 729-amino-acid chain; its full sequence is Phosphoribosylformylglycinamidine synthase subunit PurL (729 aa).

The active site involves H54. ATP contacts are provided by Y57 and K96. Residue E98 participates in Mg(2+) binding. Residues S99–H102 and R121 each bind substrate. Residue H100 is the Proton acceptor of the active site. Position 122 (D122) interacts with Mg(2+). Q245 serves as a coordination point for substrate. Residue D273 coordinates Mg(2+). E317 to Q319 contacts substrate. Residues D495 and G532 each contribute to the ATP site. N533 lines the Mg(2+) pocket. S535 lines the substrate pocket.

The protein belongs to the FGAMS family. Monomer. Part of the FGAM synthase complex composed of 1 PurL, 1 PurQ and 2 PurS subunits.

It localises to the cytoplasm. The enzyme catalyses N(2)-formyl-N(1)-(5-phospho-beta-D-ribosyl)glycinamide + L-glutamine + ATP + H2O = 2-formamido-N(1)-(5-O-phospho-beta-D-ribosyl)acetamidine + L-glutamate + ADP + phosphate + H(+). It functions in the pathway purine metabolism; IMP biosynthesis via de novo pathway; 5-amino-1-(5-phospho-D-ribosyl)imidazole from N(2)-formyl-N(1)-(5-phospho-D-ribosyl)glycinamide: step 1/2. Functionally, part of the phosphoribosylformylglycinamidine synthase complex involved in the purines biosynthetic pathway. Catalyzes the ATP-dependent conversion of formylglycinamide ribonucleotide (FGAR) and glutamine to yield formylglycinamidine ribonucleotide (FGAM) and glutamate. The FGAM synthase complex is composed of three subunits. PurQ produces an ammonia molecule by converting glutamine to glutamate. PurL transfers the ammonia molecule to FGAR to form FGAM in an ATP-dependent manner. PurS interacts with PurQ and PurL and is thought to assist in the transfer of the ammonia molecule from PurQ to PurL. The polypeptide is Phosphoribosylformylglycinamidine synthase subunit PurL (Staphylococcus saprophyticus subsp. saprophyticus (strain ATCC 15305 / DSM 20229 / NCIMB 8711 / NCTC 7292 / S-41)).